Consider the following 159-residue polypeptide: Ribosomal RNA large subunit methyltransferase H (159 aa).

S-adenosyl-L-methionine-binding positions include leucine 76, glycine 108, and 127 to 132 (FGLLTL).

It belongs to the RNA methyltransferase RlmH family. In terms of assembly, homodimer.

It is found in the cytoplasm. It catalyses the reaction pseudouridine(1915) in 23S rRNA + S-adenosyl-L-methionine = N(3)-methylpseudouridine(1915) in 23S rRNA + S-adenosyl-L-homocysteine + H(+). In terms of biological role, specifically methylates the pseudouridine at position 1915 (m3Psi1915) in 23S rRNA. This is Ribosomal RNA large subunit methyltransferase H from Streptococcus pyogenes serotype M3 (strain SSI-1).